Here is a 611-residue protein sequence, read N- to C-terminus: Ankyrin repeat protein SKIP35 (611 aa).

ANK repeat units lie at residues 292–322 (LFSN…EGGA), 323–353 (DNVN…RNSL), 356–384 (DVDL…NAIA), 385–414 (FLGP…DMEL), 416–442 (LALT…PPVL), and 445–478 (LSIE…DSTA).

As to quaternary structure, interacts with SKP1A/ASK1.

The sequence is that of Ankyrin repeat protein SKIP35 (SKIP35) from Arabidopsis thaliana (Mouse-ear cress).